We begin with the raw amino-acid sequence, 360 residues long: MKASLLNKLDVLQDRFEELTALLGDGEVISDQAKFRAYSKEYAEVEPIVATYKHLTKVQADLEGAQALLKDSDPDMREMAVEEVREAKEKLAELEGDLQRMLLPKDPNDGRNVFLEIRAGTGGDEAAIFSGDLFRMYSRYAERRGWRVEILSENEGEHGGYKEVIARVEGDNVYGKLKFESGAHRVQRVPATESQGRIHTSACTVAVLPEPDEQEAIEINPADLRVDTYRSSGAGGQHVNKTDSAIRITHLPSGIVVECQEERSQHKNRARAMSWLSAKLNDQQTSAAANAIASERKLLVGSGDRSERIRTYNFAQGRVTDHRVNLTLYSLDEILAGGVDAVIEPLLAEYQADQLAAIGE.

Gln-237 is modified (N5-methylglutamine).

Belongs to the prokaryotic/mitochondrial release factor family. Methylated by PrmC. Methylation increases the termination efficiency of RF1.

Its subcellular location is the cytoplasm. Functionally, peptide chain release factor 1 directs the termination of translation in response to the peptide chain termination codons UAG and UAA. The protein is Peptide chain release factor 1 of Pseudomonas fluorescens (strain SBW25).